We begin with the raw amino-acid sequence, 1430 residues long: Transport and Golgi organization protein 1 (1430 aa).

Residues 1 to 34 (MRLTNEKATMQPQLSDLALVLGLLICCLPTLTWA) form the signal peptide. Residues 35-796 (ATLSDKRLCA…ADKLVDHSQL (762 aa)) lie on the Extracellular side of the membrane. In terms of domain architecture, SH3 spans 50–112 (QIISMGIAKI…NKDFIMEKKI (63 aa)). Disordered stretches follow at residues 253-272 (QEEPKAQQPATEAEKPPPLP), 284-303 (DFDYGDDETDDDSQQGSQDN), 318-362 (ESIE…SLPT), 445-524 (SDAE…DQQK), and 568-673 (EEAE…TDNH). The span at 284 to 296 (DFDYGDDETDDDS) shows a compositional bias: acidic residues. Basic and acidic residues-rich tracts occupy residues 331–357 (KKTDKVEDSKDETKEKHAEMEVSKQED), 497–524 (LQEEQEKQRLVAEAEEQKRLQEEADQQK), and 568–588 (EEAEKQKRLHEESEQLQRSSE). Positions 494–620 (YKQLQEEQEK…QSNEIVDNNN (127 aa)) form a coiled coil. A compositionally biased stretch (polar residues) spans 594–621 (LSVQEANMQQLNDSVDSQSNEIVDNNNR). Positions 640-651 (HPSTASHTTPTP) are enriched in low complexity. The chain crosses the membrane as a helical span at residues 797 to 817 (LLCVVIAAISSLFFMFAYYCF). The Cytoplasmic portion of the chain corresponds to 818 to 1430 (CNSSQEGALL…SATSRPYSEV (613 aa)). 2 positions are modified to phosphoserine: S865 and S868. A coiled-coil region spans residues 869–1245 (NDMVADLKKQ…SLRRKLTTMA (377 aa)). Over residues 1105–1114 (SQLQQSSQDV) the composition is skewed to low complexity. 2 disordered regions span residues 1105–1126 (SQLQQSSQDVEQLKQDFNQSER) and 1312–1430 (LPPT…YSEV). The segment covering 1115–1126 (EQLKQDFNQSER) has biased composition (basic and acidic residues). Pro residues predominate over residues 1321–1334 (RPPPLGRMRSPPPS). Over residues 1336-1346 (RGDRDRERYSD) the composition is skewed to basic and acidic residues. A phosphoserine mark is found at S1345 and S1348. A compositionally biased stretch (acidic residues) spans 1348 to 1361 (SDYDDYDDDEEDDR). Positions 1364–1380 (DRRRRHSGSWGRRHRGS) are enriched in basic residues. The segment covering 1387–1402 (TYRSLSPSDSRYNYND) has biased composition (polar residues). 2 positions are modified to phosphoserine: S1390 and S1392. The span at 1408-1417 (SPPPSPPPVP) shows a compositional bias: pro residues. Polar residues predominate over residues 1420–1430 (RSATSRPYSEV).

This sequence belongs to the MIA/OTOR family. Tango1 subfamily.

The protein resides in the golgi apparatus membrane. It is found in the golgi apparatus. Its subcellular location is the trans-Golgi network. Functionally, required for protein secretion. May participate in cargo loading by binding to COPII coat subunits and guiding SH3-bound proteins into a growing carrier. At basal transitional ER sites in follicle epithelial cells, mediates the exit of basal membrane protein such as vkg, LanB1 and Trol, from the endoplasmic reticulum (ER) to basal Golgi clusters. The sequence is that of Transport and Golgi organization protein 1 from Drosophila melanogaster (Fruit fly).